We begin with the raw amino-acid sequence, 123 residues long: Small ribosomal subunit protein uS13 (123 aa).

The segment at 96–123 (GLPVRGQRTKTNARTRKGPKKTVAGKKK) is disordered.

It belongs to the universal ribosomal protein uS13 family. In terms of assembly, part of the 30S ribosomal subunit. Forms a loose heterodimer with protein S19. Forms two bridges to the 50S subunit in the 70S ribosome.

Functionally, located at the top of the head of the 30S subunit, it contacts several helices of the 16S rRNA. In the 70S ribosome it contacts the 23S rRNA (bridge B1a) and protein L5 of the 50S subunit (bridge B1b), connecting the 2 subunits; these bridges are implicated in subunit movement. Contacts the tRNAs in the A and P-sites. The chain is Small ribosomal subunit protein uS13 from Nocardia farcinica (strain IFM 10152).